We begin with the raw amino-acid sequence, 370 residues long: Homoserine O-acetyltransferase (370 aa).

Positions 44–350 (NAILVAHAWT…AYGHDAFLLE (307 aa)) constitute an AB hydrolase-1 domain. Ser-150 acts as the Nucleophile in catalysis. Arg-217 is a substrate binding site. Active-site residues include Asp-311 and His-344. Residue Asp-345 participates in substrate binding.

The protein belongs to the AB hydrolase superfamily. MetX family. In terms of assembly, homodimer.

Its subcellular location is the cytoplasm. The catalysed reaction is L-homoserine + acetyl-CoA = O-acetyl-L-homoserine + CoA. It functions in the pathway amino-acid biosynthesis; L-methionine biosynthesis via de novo pathway; O-acetyl-L-homoserine from L-homoserine: step 1/1. Transfers an acetyl group from acetyl-CoA to L-homoserine, forming acetyl-L-homoserine. This chain is Homoserine O-acetyltransferase, found in Geotalea uraniireducens (strain Rf4) (Geobacter uraniireducens).